A 485-amino-acid polypeptide reads, in one-letter code: E-selectin (485 aa).

Positions 1–22 are cleaved as a signal peptide; it reads MIVSQYLSALTFVLLLFKESRT. The 118-residue stretch at 23–140 folds into the C-type lectin domain; sequence WSYHASTEMM…CTKQKLALCY (118 aa). The Extracellular portion of the chain corresponds to 23–430; sequence WSYHASTEMM…CEAPTVSQTP (408 aa). 15 disulfide bridges follow: cysteine 41–cysteine 139, cysteine 112–cysteine 131, cysteine 144–cysteine 155, cysteine 149–cysteine 164, cysteine 166–cysteine 175, cysteine 181–cysteine 224, cysteine 194–cysteine 206, cysteine 210–cysteine 237, cysteine 242–cysteine 286, cysteine 255–cysteine 268, cysteine 272–cysteine 299, cysteine 304–cysteine 349, cysteine 335–cysteine 362, cysteine 367–cysteine 408, and cysteine 394–cysteine 421. N-linked (GlcNAc...) asparagine glycosylation is found at asparagine 61, asparagine 79, and asparagine 88. Residues glutamate 102, asparagine 104, and glutamate 110 each coordinate Ca(2+). A carbohydrate contacts are provided by residues 102–110, 114–119, and 127–129; these read EPNNKQSDE, EIYIKR, and NDE. Asparagine 127 and aspartate 128 together coordinate Ca(2+). Residues 141–176 form the EGF-like domain; it reads KAACNPTPCGSHGECVETINNYTCQCHPGFKGLKCE. An N-linked (GlcNAc...) asparagine glycan is attached at asparagine 161. Sushi domains follow at residues 179 to 239, 240 to 301, 302 to 364, and 365 to 423; these read VTCP…KCNV, VKCD…TCKA, VSCA…VCEV, and VRCS…TCEA. Residue asparagine 203 is glycosylated (N-linked (GlcNAc...) asparagine). Asparagine 265 is a glycosylation site (N-linked (GlcNAc...) asparagine). Asparagine 312 and asparagine 316 each carry an N-linked (GlcNAc...) asparagine glycan. Asparagine 379 and asparagine 401 each carry an N-linked (GlcNAc...) asparagine glycan. The helical transmembrane segment at 431 to 453 threads the bilayer; sequence LAVGLSTAGVSLVTIPSFLFWLL. The Cytoplasmic portion of the chain corresponds to 454-485; sequence KRLQKKAKKFSPASSCSSLKSNGCYSTPSKLI. Positions 466 to 485 are disordered; sequence ASSCSSLKSNGCYSTPSKLI.

It belongs to the selectin/LECAM family. Interacts with SELPLG/PSGL1 and PODXL2 through the sialyl Lewis X epitope. SELPLG sulfation appears not to be required for this interaction.

The protein resides in the cell membrane. Its function is as follows. Cell-surface glycoprotein having a role in immunoadhesion. Mediates in the adhesion of blood neutrophils in cytokine-activated endothelium through interaction with SELPLG/PSGL1. May have a role in capillary morphogenesis. The polypeptide is E-selectin (SELE) (Bos taurus (Bovine)).